The primary structure comprises 378 residues: Cytochrome b (378 aa).

The next 4 membrane-spanning stretches (helical) occupy residues 34 to 54, 78 to 99, 114 to 134, and 179 to 199; these read FGSLLGLCLIIQILTGLFLAM, WLLRTLHANGASFFFICIYLHV, WLIGVIILFLVMGTAFMGYVL, and FFTFHFILPFIVLAMTMIHLL. Heme b-binding residues include His-84 and His-98. Heme b is bound by residues His-183 and His-197. A ubiquinone is bound at residue His-202. 4 consecutive transmembrane segments (helical) span residues 227-247, 289-309, 321-341, and 348-368; these read FKDIVGFIVMIFILISLVLIS, LGGVIALVLSIAILMILPFYN, INQVMFWSMLVTVILLTWIGA, and YVLIGQILTVVYFLYYLVNPL.

The protein belongs to the cytochrome b family. The main subunits of complex b-c1 are: cytochrome b, cytochrome c1 and the Rieske protein. The cofactor is heme b.

It localises to the mitochondrion inner membrane. In terms of biological role, component of the ubiquinol-cytochrome c reductase complex (complex III or cytochrome b-c1 complex) that is part of the mitochondrial respiratory chain. The b-c1 complex mediates electron transfer from ubiquinol to cytochrome c. Contributes to the generation of a proton gradient across the mitochondrial membrane that is then used for ATP synthesis. This chain is Cytochrome b (mt:Cyt-b), found in Drosophila mauritiana (Fruit fly).